Consider the following 1000-residue polypeptide: Chloride channel protein D (1000 aa).

2 stretches are compositionally biased toward low complexity: residues Met1–Asn16 and Asn38–Val60. Positions Met1–Glu90 are disordered. Residues Met1 to Trp256 lie on the Cytoplasmic side of the membrane. Positions Arg71–Glu80 are enriched in basic and acidic residues. The next 10 membrane-spanning stretches (helical) occupy residues Ile257–Val277, Ala290–Leu310, Gly416–Leu436, Phe442–Met462, Ile493–Ile513, Leu534–Phe554, Leu678–Ala698, Met710–Gly730, Val733–Ser753, and Tyr772–His792. CBS domains are found at residues Met824–Val881 and Met926–Leu984.

Belongs to the chloride channel (TC 2.A.49) family.

Its subcellular location is the membrane. In terms of biological role, voltage-gated chloride channel. Chloride channels may have several functions including the regulation of cell volume, membrane potential stabilization and signal transduction. Required for normal aggregation. The chain is Chloride channel protein D (clcD) from Dictyostelium discoideum (Social amoeba).